Here is a 367-residue protein sequence, read N- to C-terminus: Pyrimidine monooxygenase RutA (367 aa).

FMN-binding positions include 50 to 51, asparagine 116, glutamate 125, 141 to 142, and serine 191; these read IK and RY.

Belongs to the NtaA/SnaA/DszA monooxygenase family. RutA subfamily.

The enzyme catalyses uracil + FMNH2 + NADH + O2 = (Z)-3-ureidoacrylate + FMN + NAD(+) + H2O + H(+). It catalyses the reaction thymine + FMNH2 + NADH + O2 = (Z)-2-methylureidoacrylate + FMN + NAD(+) + H2O + H(+). Functionally, catalyzes the pyrimidine ring opening between N-3 and C-4 by an unusual flavin hydroperoxide-catalyzed mechanism, adding oxygen atoms in the process to yield ureidoacrylate peracid, that immediately reacts with FMN forming ureidoacrylate and FMN-N(5)-oxide. The FMN-N(5)-oxide reacts spontaneously with NADH to produce FMN. Requires the flavin reductase RutF to regenerate FMN in vivo. The protein is Pyrimidine monooxygenase RutA of Allorhizobium ampelinum (strain ATCC BAA-846 / DSM 112012 / S4) (Agrobacterium vitis (strain S4)).